We begin with the raw amino-acid sequence, 398 residues long: MSVFSLKIDIADNKFFNGETSPLFSQSQAKLARQFHQKIAGYRPTPLCALDDLANLFGVKKILVKDESKRFGLNAFKMLGGAYAIAQLLCEKYHLDIETLSFEHLKNAIGEKMTFATTTDGNHGRGVAWAAQQLGQNAVIYMPKGSAQERVDAILNLGAECIVTDMNYDDTVRLTMQHAQQHGWEVVQDTAWEGYTKIPTWIMQGYATLADEAVEQMREMGVTPTHVLLQAGVGAMAGGVLGYLVDVYSPQNLHSIIVEPDKADCIYRSGVKGDIVNVGGDMATIMAGLACGEPNPLGWEILRNCATQFISCQDSVAALGMRVLGNPYGNDPRIISGESGAVGLGVLAAVHYHPQRQSLMEKLALNKDAVVLVISTEGDTDVKHYREVVWEGKHAVAP.

At K77 the chain carries N6-(pyridoxal phosphate)lysine.

This sequence belongs to the diaminopropionate ammonia-lyase family. In terms of assembly, homodimer. Pyridoxal 5'-phosphate serves as cofactor.

The enzyme catalyses (S)-2,3-diaminopropanoate + H2O + H(+) = pyruvate + 2 NH4(+). It carries out the reaction (R)-2,3-diaminopropanoate + H2O + H(+) = pyruvate + 2 NH4(+). Functionally, catalyzes the alpha,beta-elimination reaction of both L- and D-alpha,beta-diaminopropionate (DAP) to form pyruvate and ammonia. The D-isomer of serine is degraded to pyruvate, though very poorly; other amino acids (L-serine, D- and L-threonine, D- and L-beta-Cl-alanine) are not substrates. The polypeptide is Diaminopropionate ammonia-lyase (ygeX) (Escherichia coli O157:H7).